The primary structure comprises 332 residues: Adenosine deaminase (332 aa).

Residues His-12 and His-14 each contribute to the Zn(2+) site. Residues His-14, Asp-16, and Gly-169 each contribute to the substrate site. His-196 provides a ligand contact to Zn(2+). Glu-199 acts as the Proton donor in catalysis. Zn(2+) is bound at residue Asp-277.

It belongs to the metallo-dependent hydrolases superfamily. Adenosine and AMP deaminases family. Adenosine deaminase subfamily. It depends on Zn(2+) as a cofactor.

It catalyses the reaction adenosine + H2O + H(+) = inosine + NH4(+). It carries out the reaction 2'-deoxyadenosine + H2O + H(+) = 2'-deoxyinosine + NH4(+). Functionally, catalyzes the hydrolytic deamination of adenosine and 2-deoxyadenosine. This chain is Adenosine deaminase, found in Vibrio atlanticus (strain LGP32) (Vibrio splendidus (strain Mel32)).